The chain runs to 487 residues: ATP synthase subunit beta (487 aa).

Position 164–171 (164–171) interacts with ATP; sequence GGAGVGKT.

Belongs to the ATPase alpha/beta chains family. F-type ATPases have 2 components, CF(1) - the catalytic core - and CF(0) - the membrane proton channel. CF(1) has five subunits: alpha(3), beta(3), gamma(1), delta(1), epsilon(1). CF(0) has four main subunits: a(1), b(1), b'(1) and c(9-12).

Its subcellular location is the cellular thylakoid membrane. It carries out the reaction ATP + H2O + 4 H(+)(in) = ADP + phosphate + 5 H(+)(out). In terms of biological role, produces ATP from ADP in the presence of a proton gradient across the membrane. The catalytic sites are hosted primarily by the beta subunits. The protein is ATP synthase subunit beta of Synechococcus sp. (strain CC9605).